Consider the following 338-residue polypeptide: Taste receptor type 2 member 39 (338 aa).

At 1-30 (MLGRCFPPDTKEKQQLRMTKLCDPAESELS) the chain is on the extracellular side. A helical membrane pass occupies residues 31–51 (PFLITLILAVLLAEYLIGIIA). Residues 52–74 (NGFIMAIHAAEWVQNKAVSTSGR) lie on the Cytoplasmic side of the membrane. Residues 75–95 (ILVFLSVSRIALQSLMMLEIT) form a helical membrane-spanning segment. The Extracellular portion of the chain corresponds to 96-116 (ISSTSLSFYSEDAVYYAFKIS). The chain crosses the membrane as a helical span at residues 117-137 (FIFLNFCSLWFAAWLSFFYFV). Topologically, residues 138–156 (KIANFSYPLFLKLRWRITG) are cytoplasmic. Residues 157 to 177 (LIPWLLWLSVFISFSHSMFCI) traverse the membrane as a helical segment. The Extracellular segment spans residues 178–205 (NICTVYCNNSFPIHSSNSTKKTYLSEIN). Residues N185 and N194 are each glycosylated (N-linked (GlcNAc...) asparagine). A helical transmembrane segment spans residues 206–226 (VVGLAFFFNLGIVTPLIMFIL). The Cytoplasmic segment spans residues 227–262 (TATLLILSLKRHTLHMGSNATGSNDPSMEAHMGAIK). A helical membrane pass occupies residues 263–283 (AISYFLILYIFNAVALFIYLS). The Extracellular portion of the chain corresponds to 284–291 (NMFDINSL). A helical membrane pass occupies residues 292-312 (WNNLCQIIMAAYPASHSILLI). Over 313–338 (QDNPGLRRAWKRLQLRLHLYPKEWTL) the chain is Cytoplasmic.

This sequence belongs to the G-protein coupled receptor T2R family. In terms of tissue distribution, expressed in subsets of taste receptor cells of the tongue and exclusively in gustducin-positive cells.

Its subcellular location is the membrane. In terms of biological role, receptor that may play a role in the perception of bitterness and is gustducin-linked. May play a role in sensing the chemical composition of the gastrointestinal content. The activity of this receptor may stimulate alpha gustducin, mediate PLC-beta-2 activation and lead to the gating of TRPM5. The chain is Taste receptor type 2 member 39 (TAS2R39) from Homo sapiens (Human).